The chain runs to 92 residues: Small ribosomal subunit protein uS19 (92 aa).

This sequence belongs to the universal ribosomal protein uS19 family.

Its function is as follows. Protein S19 forms a complex with S13 that binds strongly to the 16S ribosomal RNA. The sequence is that of Small ribosomal subunit protein uS19 from Corynebacterium efficiens (strain DSM 44549 / YS-314 / AJ 12310 / JCM 11189 / NBRC 100395).